A 205-amino-acid chain; its full sequence is Glutathione peroxidase 1 (205 aa).

At serine 37 the chain carries Phosphoserine. Selenocysteine 52 is a catalytic residue. Residue selenocysteine 52 is a non-standard amino acid, selenocysteine. Lysine 91 and lysine 117 each carry N6-acetyllysine; alternate. Residues lysine 91 and lysine 117 each carry the N6-succinyllysine; alternate modification. N-linked (Glc) (glycation) lysine; in vitro glycosylation occurs at lysine 117. Lysine 124 is subject to N6-acetyllysine. The residue at position 151 (lysine 151) is an N6-acetyllysine; alternate. Lysine 151 bears the N6-succinyllysine; alternate mark. Residues serine 200 and serine 204 each carry the phosphoserine modification.

The protein belongs to the glutathione peroxidase family. As to quaternary structure, homotetramer. Interacts with MIEN1. In terms of processing, during periods of oxidative stress, Sec-52 may react with a superoxide radical, irreversibly lose hydroselenide and be converted to dehydroalanine.

The protein localises to the cytoplasm. It is found in the mitochondrion. It catalyses the reaction 2 glutathione + H2O2 = glutathione disulfide + 2 H2O. It carries out the reaction a hydroperoxy polyunsaturated fatty acid + 2 glutathione = a hydroxy polyunsaturated fatty acid + glutathione disulfide + H2O. The enzyme catalyses tert-butyl hydroperoxide + 2 glutathione = tert-butanol + glutathione disulfide + H2O. The catalysed reaction is cumene hydroperoxide + 2 glutathione = 2-phenylpropan-2-ol + glutathione disulfide + H2O. It catalyses the reaction (13S)-hydroperoxy-(9Z,11E)-octadecadienoate + 2 glutathione = (13S)-hydroxy-(9Z,11E)-octadecadienoate + glutathione disulfide + H2O. It carries out the reaction (9S)-hydroperoxy-(10E,12Z)-octadecadienoate + 2 glutathione = (9S)-hydroxy-(10E,12Z)-octadecadienoate + glutathione disulfide + H2O. The enzyme catalyses (5S)-hydroperoxy-(6E,8Z,11Z,14Z)-eicosatetraenoate + 2 glutathione = (5S)-hydroxy-(6E,8Z,11Z,14Z)-eicosatetraenoate + glutathione disulfide + H2O. The catalysed reaction is (12S)-hydroperoxy-(5Z,8Z,10E,14Z)-eicosatetraenoate + 2 glutathione = (12S)-hydroxy-(5Z,8Z,10E,14Z)-eicosatetraenoate + glutathione disulfide + H2O. It catalyses the reaction (12R)-hydroperoxy-(5Z,8Z,10E,14Z)-eicosatetraenoate + 2 glutathione = (12R)-hydroxy-(5Z,8Z,10E,14Z)-eicosatetraenoate + glutathione disulfide + H2O. It carries out the reaction (15S)-hydroperoxy-(5Z,8Z,11Z,13E)-eicosatetraenoate + 2 glutathione = (15S)-hydroxy-(5Z,8Z,11Z,13E)-eicosatetraenoate + glutathione disulfide + H2O. The enzyme catalyses (5S)-hydroperoxy-(6E,8Z,11Z,14Z,17Z)-eicosapentaenoate + 2 glutathione = (5S)-hydroxy-(6E,8Z,11Z,14Z,17Z)-eicosapentaenoate + glutathione disulfide + H2O. The catalysed reaction is (15S)-hydroperoxy-(5Z,8Z,11Z,13E,17Z)-eicosapentaenoate + 2 glutathione = (15S)-hydroxy-(5Z,8Z,11Z,13E,17Z)-eicosapentaenoate + glutathione disulfide + H2O. It catalyses the reaction (15S)-hydroperoxy-(11Z,13E)-eicosadienoate + 2 glutathione = (15S)-hydroxy-(11Z,13E)-eicosadienoate + glutathione disulfide + H2O. It carries out the reaction (17S)-hydroperoxy-(4Z,7Z,10Z,13Z,15E,19Z)-docosahexaenoate + 2 glutathione = (17S)-hydroxy-(4Z,7Z,10Z,13Z,15E,19Z)-docosahexaenoate + glutathione disulfide + H2O. Functionally, catalyzes the reduction of hydroperoxides in a glutathione-dependent manner thus regulating cellular redox homeostasis. Can reduce small soluble hydroperoxides such as H2O2, cumene hydroperoxide and tert-butyl hydroperoxide, as well as several fatty acid-derived hydroperoxides. In platelets catalyzes the reduction of 12-hydroperoxyeicosatetraenoic acid, the primary product of the arachidonate 12-lipoxygenase pathway. This is Glutathione peroxidase 1 (GPX1) from Bos taurus (Bovine).